The chain runs to 249 residues: MKISICGKGGCGKSSITTLLAKEFAKKGHNVLVIDGDESNLSLHKLLGMDLPKDFIEYLGGRKEFMKKLREKMDGKEVELFEGEISIDSLPKEYLVEKDNIKLLAIGKIHDFGEGCACPMGALLREFLKSLKLKDKEVVIVDTEAGIEHFGRGVEGGCDVIIAIIDPTYESIRLSKKIEEIGEKLGKKVYFIVNKVDDETKDLILENVNKDKVIAVIPNNKEIMKCGLMGEELNAELSEIKDVVEILTK.

7–14 provides a ligand contact to ATP; that stretch reads GKGGCGKS.

This is an uncharacterized protein from Methanocaldococcus jannaschii (strain ATCC 43067 / DSM 2661 / JAL-1 / JCM 10045 / NBRC 100440) (Methanococcus jannaschii).